Reading from the N-terminus, the 409-residue chain is Dihydrolipoyllysine-residue succinyltransferase component of 2-oxoglutarate dehydrogenase complex (409 aa).

Positions 2 to 77 (AIEIKAPTFP…LSNELLGKLN (76 aa)) constitute a Lipoyl-binding domain. At lysine 43 the chain carries N6-lipoyllysine. The Peripheral subunit-binding (PSBD) domain occupies 112–149 (ILSPAARKLAEEAGIDPNSIAGTGKGGRVTKEDVVAAV). Active-site residues include histidine 380 and aspartate 384.

The protein belongs to the 2-oxoacid dehydrogenase family. As to quaternary structure, forms a 24-polypeptide structural core with octahedral symmetry. Part of the 2-oxoglutarate dehydrogenase (OGDH) complex composed of E1 (2-oxoglutarate dehydrogenase), E2 (dihydrolipoamide succinyltransferase) and E3 (dihydrolipoamide dehydrogenase); the complex contains multiple copies of the three enzymatic components (E1, E2 and E3). (R)-lipoate serves as cofactor.

It carries out the reaction N(6)-[(R)-dihydrolipoyl]-L-lysyl-[protein] + succinyl-CoA = N(6)-[(R)-S(8)-succinyldihydrolipoyl]-L-lysyl-[protein] + CoA. It participates in amino-acid degradation; L-lysine degradation via saccharopine pathway; glutaryl-CoA from L-lysine: step 6/6. In terms of biological role, E2 component of the 2-oxoglutarate dehydrogenase (OGDH) complex which catalyzes the second step in the conversion of 2-oxoglutarate to succinyl-CoA and CO(2). The polypeptide is Dihydrolipoyllysine-residue succinyltransferase component of 2-oxoglutarate dehydrogenase complex (sucB) (Pseudomonas aeruginosa (strain ATCC 15692 / DSM 22644 / CIP 104116 / JCM 14847 / LMG 12228 / 1C / PRS 101 / PAO1)).